The primary structure comprises 908 residues: Protein translocase subunit SecA (908 aa).

ATP is bound by residues Gln90, 108–112 (GEGKT), and Asp503. Residues 846–864 (AAAAEAPVAPAPQPAAAAP) are compositionally biased toward low complexity. A disordered region spans residues 846–884 (AAAAEAPVAPAPQPAAAAPQPTPELVGAEAGEPDPAAWG). Residues Cys892, Cys894, Cys903, and His904 each coordinate Zn(2+).

It belongs to the SecA family. As to quaternary structure, monomer and homodimer. Part of the essential Sec protein translocation apparatus which comprises SecA, SecYEG and auxiliary proteins SecDF-YajC and YidC. Zn(2+) is required as a cofactor.

It localises to the cell inner membrane. The protein localises to the cytoplasm. It catalyses the reaction ATP + H2O + cellular proteinSide 1 = ADP + phosphate + cellular proteinSide 2.. Its function is as follows. Part of the Sec protein translocase complex. Interacts with the SecYEG preprotein conducting channel. Has a central role in coupling the hydrolysis of ATP to the transfer of proteins into and across the cell membrane, serving both as a receptor for the preprotein-SecB complex and as an ATP-driven molecular motor driving the stepwise translocation of polypeptide chains across the membrane. This is Protein translocase subunit SecA from Cereibacter sphaeroides (strain ATCC 17029 / ATH 2.4.9) (Rhodobacter sphaeroides).